Consider the following 38-residue polypeptide: MKVRPSVKRMCDSCKIVKRRGRVMVICINPKHKQRQGK.

It belongs to the bacterial ribosomal protein bL36 family.

This is Large ribosomal subunit protein bL36 from Limosilactobacillus fermentum (strain NBRC 3956 / LMG 18251) (Lactobacillus fermentum).